A 243-amino-acid polypeptide reads, in one-letter code: Probable 6-phosphogluconolactonase (243 aa).

It belongs to the glucosamine/galactosamine-6-phosphate isomerase family. 6-phosphogluconolactonase subfamily.

The catalysed reaction is 6-phospho-D-glucono-1,5-lactone + H2O = 6-phospho-D-gluconate + H(+). The protein operates within carbohydrate degradation; pentose phosphate pathway; D-ribulose 5-phosphate from D-glucose 6-phosphate (oxidative stage): step 2/3. In terms of biological role, hydrolysis of 6-phosphogluconolactone to 6-phosphogluconate. In Drosophila melanogaster (Fruit fly), this protein is Probable 6-phosphogluconolactonase.